The primary structure comprises 388 residues: MIKTITSLRKTLVLPLHLHIRTLQTFAKYNAQAASALREERKKPLYQNGDDVYADLDWDNLGFGLNPADYMYVMKCSKDGEFTQGELSPYGNIQLSPSAGVLNYGQAIYEGTKAYRKENGKLLLFRPDHNAIRMKLGAERMLMPSPSVDQFVNAVKQTALANKRWVPPAGKGTLYIRPLLMGSGPILGLGPAPEYTFIVYASPVGNYFKEGMAALNLYVEEEYVRAAPGGAGGVKSITNYAPVLKALSRAKSRGFSDVLYLDSVKKKYLEEASSCNVFVVKGRTISTPATNGTILEGITRKSVMEIASDQGYQVVEKAVHVDEVMDADEVFCTGTAVVVAPVGTITYQEKRVEYKTGDESVCQKLRSVLVGIQTGLIEDNKGWVTDIN.

A chloroplast-targeting transit peptide spans 1–22; sequence MIKTITSLRKTLVLPLHLHIRT. Lys-235 is modified (N6-(pyridoxal phosphate)lysine).

Belongs to the class-IV pyridoxal-phosphate-dependent aminotransferase family. The cofactor is pyridoxal 5'-phosphate.

It is found in the plastid. The protein resides in the chloroplast. The enzyme catalyses L-leucine + 2-oxoglutarate = 4-methyl-2-oxopentanoate + L-glutamate. It carries out the reaction L-isoleucine + 2-oxoglutarate = (S)-3-methyl-2-oxopentanoate + L-glutamate. The catalysed reaction is L-valine + 2-oxoglutarate = 3-methyl-2-oxobutanoate + L-glutamate. It functions in the pathway amino-acid biosynthesis; L-isoleucine biosynthesis; L-isoleucine from 2-oxobutanoate: step 4/4. The protein operates within amino-acid biosynthesis; L-leucine biosynthesis; L-leucine from 3-methyl-2-oxobutanoate: step 4/4. It participates in amino-acid biosynthesis; L-valine biosynthesis; L-valine from pyruvate: step 4/4. Converts 2-oxo acids to branched-chain amino acids. Shows activity with L-Leu, L-Ile and L-Val as amino donors and 2-oxoglutarate as an amino acceptor, but no activity for D-isomers of Leu, Ile, Val, Asp, Glu or Ala. This chain is Branched-chain-amino-acid aminotransferase 2, chloroplastic (BCAT2), found in Arabidopsis thaliana (Mouse-ear cress).